We begin with the raw amino-acid sequence, 382 residues long: MTANLLDFDLDGLAVFCERLGEKRYRAVQLFRWIHQKGASNFDDMSDLAKSLREKLKVSAQVKAPDLISQHISSDGTIKWLFDVGGGDAVEAVFIPEEDRGTLCISSQAGCAMGCRFCSTGHQGFSRNLKTGEIIAQLWFAEHFLRKHLQRDERVISNVVMMGMGEPLQNYAELVPALRAMLDDHGYGLSRRRVTVSTSGVVPMMDRLARDCPVALAVSLHAPNDLLRDDLVPLNKKYSLAELLNACNRYLAYAPRDFITFEYCMLEDVNDQPEHAQQLVRLVQHYSSGGVWCKFNLIPFNPFPASGLTRSTPERIQAFAKILSDAGIVTTIRKTRGDDIDAACGQLAGEVKDRTRVGERIARQRTFMLKPVSEINTQVKEN.

The active-site Proton acceptor is the Glu-91. In terms of domain architecture, Radical SAM core spans 97–339 (EEDRGTLCIS…TTIRKTRGDD (243 aa)). Cys-104 and Cys-344 are joined by a disulfide. Residues Cys-111, Cys-115, and Cys-118 each contribute to the [4Fe-4S] cluster site. S-adenosyl-L-methionine is bound by residues 165 to 166 (GE), Ser-197, 219 to 221 (SLH), and Asn-301. Residue Cys-344 is the S-methylcysteine intermediate of the active site.

Belongs to the radical SAM superfamily. RlmN family. Requires [4Fe-4S] cluster as cofactor.

It is found in the cytoplasm. It catalyses the reaction adenosine(2503) in 23S rRNA + 2 reduced [2Fe-2S]-[ferredoxin] + 2 S-adenosyl-L-methionine = 2-methyladenosine(2503) in 23S rRNA + 5'-deoxyadenosine + L-methionine + 2 oxidized [2Fe-2S]-[ferredoxin] + S-adenosyl-L-homocysteine. The enzyme catalyses adenosine(37) in tRNA + 2 reduced [2Fe-2S]-[ferredoxin] + 2 S-adenosyl-L-methionine = 2-methyladenosine(37) in tRNA + 5'-deoxyadenosine + L-methionine + 2 oxidized [2Fe-2S]-[ferredoxin] + S-adenosyl-L-homocysteine. Its function is as follows. Specifically methylates position 2 of adenine 2503 in 23S rRNA and position 2 of adenine 37 in tRNAs. m2A2503 modification seems to play a crucial role in the proofreading step occurring at the peptidyl transferase center and thus would serve to optimize ribosomal fidelity. This chain is Dual-specificity RNA methyltransferase RlmN, found in Albidiferax ferrireducens (strain ATCC BAA-621 / DSM 15236 / T118) (Rhodoferax ferrireducens).